The following is a 135-amino-acid chain: Nitrogen fixation protein NifU 1 (135 aa).

Positions 1 to 10 are enriched in basic and acidic residues; the sequence is MRDMQDDDTK. The interval 1 to 29 is disordered; it reads MRDMQDDDTKSPAPPPAAAAAARRAAGQA. The segment covering 18–29 has biased composition (low complexity); it reads AAAAARRAAGQA.

It belongs to the NifU family.

Its function is as follows. May be involved in the formation or repair of [Fe-S] clusters present in iron-sulfur proteins. The polypeptide is Nitrogen fixation protein NifU 1 (nifU1) (Rhodobacter capsulatus (Rhodopseudomonas capsulata)).